An 82-amino-acid chain; its full sequence is uncharacterized protein (82 aa).

This is an uncharacterized protein from Rickettsia prowazekii (strain Madrid E).